The following is an 86-amino-acid chain: Large ribosomal subunit protein bL27 (86 aa).

The tract at residues 1–21 is disordered; it reads MAHKKAAGSSRNGRDSESKRL.

The protein belongs to the bacterial ribosomal protein bL27 family.

This is Large ribosomal subunit protein bL27 from Hahella chejuensis (strain KCTC 2396).